We begin with the raw amino-acid sequence, 257 residues long: NAD-capped RNA hydrolase NudC (257 aa).

Substrate is bound at residue arginine 69. The Zn(2+) site is built by cysteine 98 and cysteine 101. Glutamate 111 serves as a coordination point for substrate. Zn(2+) contacts are provided by cysteine 116 and cysteine 119. Tyrosine 124 is a binding site for substrate. The Nudix hydrolase domain maps to 125 to 248 (PQIAPCIIVA…TVARRLIEDT (124 aa)). A divalent metal cation is bound by residues alanine 158, glutamate 174, and glutamate 178. The Nudix box signature appears at 159–180 (GFVEVGETLEQAVAREVMEESG). A substrate-binding site is contributed by 192-199 (QPWPFPQS). Glutamate 219 is an a divalent metal cation binding site. Residue alanine 241 coordinates substrate.

It belongs to the Nudix hydrolase family. NudC subfamily. As to quaternary structure, homodimer. It depends on Mg(2+) as a cofactor. Requires Mn(2+) as cofactor. The cofactor is Zn(2+).

The catalysed reaction is a 5'-end NAD(+)-phospho-ribonucleoside in mRNA + H2O = a 5'-end phospho-adenosine-phospho-ribonucleoside in mRNA + beta-nicotinamide D-ribonucleotide + 2 H(+). It catalyses the reaction NAD(+) + H2O = beta-nicotinamide D-ribonucleotide + AMP + 2 H(+). The enzyme catalyses NADH + H2O = reduced beta-nicotinamide D-ribonucleotide + AMP + 2 H(+). Its function is as follows. mRNA decapping enzyme that specifically removes the nicotinamide adenine dinucleotide (NAD) cap from a subset of mRNAs by hydrolyzing the diphosphate linkage to produce nicotinamide mononucleotide (NMN) and 5' monophosphate mRNA. The NAD-cap is present at the 5'-end of some mRNAs and stabilizes RNA against 5'-processing. Has preference for mRNAs with a 5'-end purine. Catalyzes the hydrolysis of a broad range of dinucleotide pyrophosphates. The sequence is that of NAD-capped RNA hydrolase NudC from Salmonella agona (strain SL483).